A 358-amino-acid chain; its full sequence is Probable arabinan endo-1,5-alpha-L-arabinosidase B (358 aa).

A signal peptide spans 1 to 16 (MVLVATLFSLFTVSLC). Residue D39 is the Proton acceptor of the active site. N194 carries an N-linked (GlcNAc...) asparagine glycan. The disordered stretch occupies residues 202-227 (HLAKHPKTERVNSQDQNPDPLCRDSS). E233 (proton donor) is an active-site residue.

It belongs to the glycosyl hydrolase 43 family.

It localises to the secreted. It catalyses the reaction Endohydrolysis of (1-&gt;5)-alpha-arabinofuranosidic linkages in (1-&gt;5)-arabinans.. Its pathway is glycan metabolism; L-arabinan degradation. In terms of biological role, endo-1,5-alpha-L-arabinanase involved in degradation of pectin. Its preferred substrate is linear 1,5-alpha-L-arabinan. This chain is Probable arabinan endo-1,5-alpha-L-arabinosidase B (abnB), found in Aspergillus flavus (strain ATCC 200026 / FGSC A1120 / IAM 13836 / NRRL 3357 / JCM 12722 / SRRC 167).